A 331-amino-acid polypeptide reads, in one-letter code: Laforin (331 aa).

The CBM20 domain maps to Met1–Leu124. A Phosphoserine; by AMPK modification is found at Ser25. Residues Trp32, Lys87, Gly103–Asp107, Asp197, Asp235, and Arg241 each bind substrate. The region spanning His156–Lys323 is the Tyrosine-protein phosphatase domain. Cys266 acts as the Phosphocysteine intermediate in catalysis. Residues Cys266–Arg272 carry the Glucan phosphatase signature motif CXAGXGR motif. Residues Asn267–Arg272 and Tyr304 contribute to the substrate site.

This sequence belongs to the protein-tyrosine phosphatase family. Homodimer. Interacts with itself. Interacts with PPP1R3B, PPP1R3C, PPP1R3D, HIRIP5, and EPM2AIP1. Binds glycogen and Lafora bodies. Interacts with NHLRC1/malin (via the NHL repeats). Forms a complex with NHLRC1/malin and HSP70. Interacts with PPP1R3D; in the presence of NHLC1/malin the interaction leads to ubiquitination and autophagic degradation of PPP1R3D. Interacts (via the phosphatase domain) with MAPT/Tau; the interaction dephosphorylates MAPT. Interacts with PRDM8. In terms of processing, polyubiquitinated by NHLRC1/malin. Post-translationally, phosphorylation on Ser-25 by AMPK affects the phosphatase activity of the enzyme and its ability to homodimerize and interact with NHLRC1, PPP1R3C or PRKAA2.

It localises to the cytoplasm. The protein resides in the endoplasmic reticulum membrane. The protein localises to the cell membrane. The enzyme catalyses O-phospho-L-tyrosyl-[protein] + H2O = L-tyrosyl-[protein] + phosphate. It carries out the reaction O-phospho-L-seryl-[protein] + H2O = L-seryl-[protein] + phosphate. The catalysed reaction is O-phospho-L-threonyl-[protein] + H2O = L-threonyl-[protein] + phosphate. Plays an important role in preventing glycogen hyperphosphorylation and the formation of insoluble aggregates, via its activity as glycogen phosphatase, and by promoting the ubiquitination of proteins involved in glycogen metabolism via its interaction with the E3 ubiquitin ligase NHLRC1/malin. Dephosphorylates phosphotyrosine and synthetic substrates, such as para-nitrophenylphosphate (pNPP), and has low activity with phosphoserine and phosphothreonine substrates (in vitro). Has also been shown to dephosphorylate MAPT. Shows strong phosphatase activity towards complex carbohydrates in vitro, avoiding glycogen hyperphosphorylation which is associated with reduced branching and formation of insoluble aggregates. Forms a complex with NHLRC1/malin and HSP70, which suppresses the cellular toxicity of misfolded proteins by promoting their degradation through the ubiquitin-proteasome system (UPS). Acts as a scaffold protein to facilitate PPP1R3C/PTG ubiquitination by NHLRC1/malin. Also promotes proteasome-independent protein degradation through the macroautophagy pathway. In Canis lupus familiaris (Dog), this protein is Laforin (EPM2A).